A 430-amino-acid chain; its full sequence is MAGPGAWKRLKSLLRKDDTPLFLNDTSAFDFSDEVSDEGLSRFNKLRVVVADDDSEAPERPVNGAHPALQADDDSLLDQDLPLTNSQLSLKMDPCDNCSKRRELLKQRKVKTRLTIAAVLYLLFMIGELVGGYMANSLAIMTDALHMLTDLSAIILTLLALWLSSKSPTRRFTFGFHRLEVLSAMISVMLVYVLMGFLLYEAVQRTIHMNYEINGDVMLITAAVGVAVNVIMGFLLNQSGHHHSHAHSHSLPSNSPSMVSSGHNHGQDSLAVRAAFVHALGDLVQSVGVLIAAYIIRFKPEYKIADPICTYIFSLLVAFTTFRIIWDTVVIILEGVPSHLNVDYIKESLMKIEDVYSVEDLNIWSLTSGKSTAIVHMQLIPGSSSKWEEVQSKAKHLLLNTFGMYKCTIQLQSYRQEVIRTCANCHSSST.

At 1–113 the chain is on the cytoplasmic side; the sequence is MAGPGAWKRL…LLKQRKVKTR (113 aa). S36 carries the phosphoserine modification. A helical transmembrane segment spans residues 114–134; sequence LTIAAVLYLLFMIGELVGGYM. Topologically, residues 135-143 are lumenal; the sequence is ANSLAIMTD. The helical transmembrane segment at 144-164 threads the bilayer; the sequence is ALHMLTDLSAIILTLLALWLS. Residues H146 and D150 each coordinate Zn(2+). Residues 165–178 are Cytoplasmic-facing; that stretch reads SKSPTRRFTFGFHR. A helical transmembrane segment spans residues 179–199; that stretch reads LEVLSAMISVMLVYVLMGFLL. Topologically, residues 200 to 216 are lumenal; the sequence is YEAVQRTIHMNYEINGD. The chain crosses the membrane as a helical span at residues 217–237; that stretch reads VMLITAAVGVAVNVIMGFLLN. The Cytoplasmic portion of the chain corresponds to 238 to 275; sequence QSGHHHSHAHSHSLPSNSPSMVSSGHNHGQDSLAVRAA. Positions 240 to 265 are zinc binding; it reads GHHHSHAHSHSLPSNSPSMVSSGHNH. The segment at 245–264 is disordered; the sequence is HAHSHSLPSNSPSMVSSGHN. Positions 249–263 are enriched in low complexity; that stretch reads HSLPSNSPSMVSSGH. The helical transmembrane segment at 276-296 threads the bilayer; the sequence is FVHALGDLVQSVGVLIAAYII. Positions 278 and 282 each coordinate Zn(2+). Residues 297–311 lie on the Lumenal side of the membrane; it reads RFKPEYKIADPICTY. A helical transmembrane segment spans residues 312 to 332; sequence IFSLLVAFTTFRIIWDTVVII. At 333-430 the chain is on the cytoplasmic side; sequence LEGVPSHLNV…TCANCHSSST (98 aa).

Belongs to the cation diffusion facilitator (CDF) transporter (TC 2.A.4) family. SLC30A subfamily. In terms of assembly, homodimerization could regulate efficiency for zinc transport. Interacts with TMEM163. Widely expressed. Highly expressed in the brain and in mammary epithelial cell lines.

It is found in the endosome membrane. Its subcellular location is the late endosome membrane. It localises to the lysosome membrane. It carries out the reaction Zn(2+)(in) + 2 H(+)(out) = Zn(2+)(out) + 2 H(+)(in). Probable proton-coupled zinc ion antiporter mediating zinc import from cytoplasm potentially into the endocytic compartment. Controls zinc deposition in milk. The protein is Probable proton-coupled zinc antiporter SLC30A4 of Mus musculus (Mouse).